The sequence spans 162 residues: Proepiregulin (162 aa).

A signal peptide spans 1–22; that stretch reads METLPASWVLTLLCLGSHLLQA. Positions 23-55 are excised as a propeptide; that stretch reads VISTTVIPSCIPGESEDNCTALVQMEDDPRVAQ. N-linked (GlcNAc...) asparagine glycosylation occurs at asparagine 40. Residues 53-112 are Extracellular-facing; the sequence is VAQVQITKCSSDMDGYCLHGQCIYLVDMREKFCRCEVGYTGLRCEHFFLTVHQPLSKEYV. The EGF-like domain maps to 57 to 97; that stretch reads QITKCSSDMDGYCLHGQCIYLVDMREKFCRCEVGYTGLRCE. Cystine bridges form between cysteine 61/cysteine 74, cysteine 69/cysteine 85, and cysteine 87/cysteine 96. The propeptide at 102–162 is removed in mature form; the sequence is TVHQPLSKEY…TSGDPVLPQV (61 aa). Residues 113 to 133 traverse the membrane as a helical segment; sequence ALTVILIFLFLIITAGCIYYF. Over 134–162 the chain is Cytoplasmic; it reads CRWYKNRKSKKSREEYERVTSGDPVLPQV.

In terms of assembly, interacts with EGFR and ERBB4.

It localises to the secreted. Its subcellular location is the extracellular space. The protein localises to the cell membrane. Functionally, ligand of the EGF receptor/EGFR and ERBB4. Stimulates EGFR and ERBB4 tyrosine phosphorylation. Contributes to inflammation, wound healing, tissue repair, and oocyte maturation by regulating angiogenesis and vascular remodeling and by stimulating cell proliferation. This Mus musculus (Mouse) protein is Proepiregulin (Ereg).